Here is a 331-residue protein sequence, read N- to C-terminus: GTPase Obg (331 aa).

Residues Met1–Leu159 enclose the Obg domain. The region spanning Ser160–Lys327 is the OBG-type G domain. GTP-binding positions include Gly166–Ser173, Phe191–Val195, Asp212–Gly215, Asn279–Asp282, and Ser308–Tyr310. Positions 173 and 193 each coordinate Mg(2+).

The protein belongs to the TRAFAC class OBG-HflX-like GTPase superfamily. OBG GTPase family. In terms of assembly, monomer. The cofactor is Mg(2+).

Its subcellular location is the cytoplasm. Functionally, an essential GTPase which binds GTP, GDP and possibly (p)ppGpp with moderate affinity, with high nucleotide exchange rates and a fairly low GTP hydrolysis rate. Plays a role in control of the cell cycle, stress response, ribosome biogenesis and in those bacteria that undergo differentiation, in morphogenesis control. This is GTPase Obg from Rickettsia prowazekii (strain Madrid E).